The primary structure comprises 212 residues: Uridine kinase (212 aa).

13–20 contributes to the ATP binding site; that stretch reads GASASGKS.

The protein belongs to the uridine kinase family.

The protein resides in the cytoplasm. It carries out the reaction uridine + ATP = UMP + ADP + H(+). It catalyses the reaction cytidine + ATP = CMP + ADP + H(+). It participates in pyrimidine metabolism; CTP biosynthesis via salvage pathway; CTP from cytidine: step 1/3. Its pathway is pyrimidine metabolism; UMP biosynthesis via salvage pathway; UMP from uridine: step 1/1. The polypeptide is Uridine kinase (Shewanella putrefaciens (strain CN-32 / ATCC BAA-453)).